A 296-amino-acid polypeptide reads, in one-letter code: 4-hydroxy-tetrahydrodipicolinate synthase (296 aa).

Thr49 is a binding site for pyruvate. The active-site Proton donor/acceptor is Tyr137. Lys166 functions as the Schiff-base intermediate with substrate in the catalytic mechanism. Ile208 provides a ligand contact to pyruvate.

This sequence belongs to the DapA family. Homotetramer; dimer of dimers.

It localises to the cytoplasm. It carries out the reaction L-aspartate 4-semialdehyde + pyruvate = (2S,4S)-4-hydroxy-2,3,4,5-tetrahydrodipicolinate + H2O + H(+). Its pathway is amino-acid biosynthesis; L-lysine biosynthesis via DAP pathway; (S)-tetrahydrodipicolinate from L-aspartate: step 3/4. Its function is as follows. Catalyzes the condensation of (S)-aspartate-beta-semialdehyde [(S)-ASA] and pyruvate to 4-hydroxy-tetrahydrodipicolinate (HTPA). The sequence is that of 4-hydroxy-tetrahydrodipicolinate synthase from Chlorobium phaeovibrioides (strain DSM 265 / 1930) (Prosthecochloris vibrioformis (strain DSM 265)).